An 808-amino-acid polypeptide reads, in one-letter code: Phospholipase D alpha 1 (808 aa).

Residues 1 to 125 form the C2 domain; it reads MAKTLLHGTL…LEGEEVDKWV (125 aa). D186 contributes to the Ca(2+) binding site. Residues 326–364 form the PLD phosphodiesterase 1 domain; that stretch reads TIFTHHQKIVVVDSEMPTSGSENRRVVSFVGGIDLCDGR. Active-site residues include H331, K333, and D338. Residue H331 participates in a 1,2-diacyl-sn-glycero-3-phosphate binding. Residues H370 and H404 each contribute to the Ca(2+) site. The PLD phosphodiesterase 2 domain occupies 654-681; sequence FMIYVHAKMMIVDDEYIIIGSANINQRS. Catalysis depends on residues H659, K661, and D666. H659 lines the a 1,2-diacyl-sn-glycero-3-phosphate pocket. E720 is a binding site for Ca(2+).

The protein belongs to the phospholipase D family. C2-PLD subfamily. Ca(2+) serves as cofactor.

The enzyme catalyses a 1,2-diacyl-sn-glycero-3-phosphocholine + H2O = a 1,2-diacyl-sn-glycero-3-phosphate + choline + H(+). Its function is as follows. Hydrolyzes glycerol-phospholipids at the terminal phosphodiesteric bond. Plays an important role in various cellular processes. The protein is Phospholipase D alpha 1 (PLD1) of Spuriopimpinella brachycarpa (Chamnamul).